Consider the following 520-residue polypeptide: MRKVEFLDTTLRDGEQTPGVNFSIKEKVAIAKQLEKWGIASIEAGFPAASPDSFEAVRQISAAMTTTAVSGLARSVKSDIDACYEALKDAKYPQCHVFIATSPIHREYKLKKTKEEILDIIKEHVTYARSKFDVVEFSPEDATRTELDYLLQVVQTAVDAGATYINIPDTVGFTTPEEYGNIFKYLIENTKSDREIIFSPHCHDDLGMATANTLAAIKNGAGRVEGTVNGIGERAGNVALEEIAVALNIREDYYQATSDIVLNETVNTSELISRFSGISIPKNKAVVGGNAFSHESGIHQDGVLKNPLTYEIITPELVGVKHNSLPLGKLSGRHAFVEKLKELELAFEESEIATLFGKFKKLADKKHEITDADIRALVAGTEIENPEGFHFGDLKLTSNADDTVTAEVLMVNADGEEVEVIANGKGSVEAIYNAVDKFFNQTVRLLSYTMDAVTDGIDSQARVSVSIENVDTGTIFNASGIDFDVLKAGAIAYVNANAFVQKENAGEIGKAVSFRDVPTN.

The 263-residue stretch at Val-4–Val-266 folds into the Pyruvate carboxyltransferase domain. Asp-13, His-201, His-203, and Asn-237 together coordinate Mn(2+). Positions His-390–Asn-520 are regulatory domain.

The protein belongs to the alpha-IPM synthase/homocitrate synthase family. LeuA type 1 subfamily. In terms of assembly, homodimer. The cofactor is Mn(2+).

It localises to the cytoplasm. The catalysed reaction is 3-methyl-2-oxobutanoate + acetyl-CoA + H2O = (2S)-2-isopropylmalate + CoA + H(+). It participates in amino-acid biosynthesis; L-leucine biosynthesis; L-leucine from 3-methyl-2-oxobutanoate: step 1/4. Functionally, catalyzes the condensation of the acetyl group of acetyl-CoA with 3-methyl-2-oxobutanoate (2-ketoisovalerate) to form 3-carboxy-3-hydroxy-4-methylpentanoate (2-isopropylmalate). In Streptococcus gallolyticus (strain UCN34), this protein is 2-isopropylmalate synthase.